Reading from the N-terminus, the 212-residue chain is Thiamine-phosphate synthase (212 aa).

Residues Gln33–Lys37 and Asn65 each bind 4-amino-2-methyl-5-(diphosphooxymethyl)pyrimidine. 2 residues coordinate Mg(2+): Asp66 and Asp85. Residue Thr104 coordinates 4-amino-2-methyl-5-(diphosphooxymethyl)pyrimidine. Thr130–Thr132 contacts 2-[(2R,5Z)-2-carboxy-4-methylthiazol-5(2H)-ylidene]ethyl phosphate. Lys133 lines the 4-amino-2-methyl-5-(diphosphooxymethyl)pyrimidine pocket. Position 166 (Gly166) interacts with 2-[(2R,5Z)-2-carboxy-4-methylthiazol-5(2H)-ylidene]ethyl phosphate.

The protein belongs to the thiamine-phosphate synthase family. The cofactor is Mg(2+).

It catalyses the reaction 2-[(2R,5Z)-2-carboxy-4-methylthiazol-5(2H)-ylidene]ethyl phosphate + 4-amino-2-methyl-5-(diphosphooxymethyl)pyrimidine + 2 H(+) = thiamine phosphate + CO2 + diphosphate. It carries out the reaction 2-(2-carboxy-4-methylthiazol-5-yl)ethyl phosphate + 4-amino-2-methyl-5-(diphosphooxymethyl)pyrimidine + 2 H(+) = thiamine phosphate + CO2 + diphosphate. The enzyme catalyses 4-methyl-5-(2-phosphooxyethyl)-thiazole + 4-amino-2-methyl-5-(diphosphooxymethyl)pyrimidine + H(+) = thiamine phosphate + diphosphate. The protein operates within cofactor biosynthesis; thiamine diphosphate biosynthesis; thiamine phosphate from 4-amino-2-methyl-5-diphosphomethylpyrimidine and 4-methyl-5-(2-phosphoethyl)-thiazole: step 1/1. Its function is as follows. Condenses 4-methyl-5-(beta-hydroxyethyl)thiazole monophosphate (THZ-P) and 2-methyl-4-amino-5-hydroxymethyl pyrimidine pyrophosphate (HMP-PP) to form thiamine monophosphate (TMP). The polypeptide is Thiamine-phosphate synthase (Flavobacterium johnsoniae (strain ATCC 17061 / DSM 2064 / JCM 8514 / BCRC 14874 / CCUG 350202 / NBRC 14942 / NCIMB 11054 / UW101) (Cytophaga johnsonae)).